A 160-amino-acid chain; its full sequence is Large ribosomal subunit protein uL22c (160 aa).

Belongs to the universal ribosomal protein uL22 family. Part of the 50S ribosomal subunit.

It is found in the plastid. Its subcellular location is the chloroplast. This protein binds specifically to 23S rRNA. In terms of biological role, the globular domain of the protein is located near the polypeptide exit tunnel on the outside of the subunit, while an extended beta-hairpin is found that lines the wall of the exit tunnel in the center of the 70S ribosome. The protein is Large ribosomal subunit protein uL22c (rpl22) of Capsella bursa-pastoris (Shepherd's purse).